A 94-amino-acid chain; its full sequence is Putative pterin-4-alpha-carbinolamine dehydratase (94 aa).

It belongs to the pterin-4-alpha-carbinolamine dehydratase family.

The catalysed reaction is (4aS,6R)-4a-hydroxy-L-erythro-5,6,7,8-tetrahydrobiopterin = (6R)-L-erythro-6,7-dihydrobiopterin + H2O. The polypeptide is Putative pterin-4-alpha-carbinolamine dehydratase (Koribacter versatilis (strain Ellin345)).